A 732-amino-acid polypeptide reads, in one-letter code: Ubiquitin carboxyl-terminal hydrolase 21 (732 aa).

A compositionally biased stretch (pro residues) spans 1 to 10 (MAEFSDPPPS). The segment at 1 to 111 (MAEFSDPPPS…ISPVSNNNHL (111 aa)) is disordered. 2 stretches are compositionally biased toward polar residues: residues 11 to 31 (NLSS…SSPT) and 38 to 53 (VTNS…QIQA). Residues 55 to 69 (SPAKPDGSSSSPPDK) show a composition bias toward low complexity. A USP domain is found at 163 to 469 (AGLYNSGNTC…PAYILFYARE (307 aa)). The Nucleophile role is filled by C172. Catalysis depends on H428, which acts as the Proton acceptor. Residues 534–732 (KEEVFHSAES…SSNMRRSIKL (199 aa)) are disordered. Positions 540-551 (SAESSNNEDSSA) are enriched in low complexity. Residues 583 to 609 (AYIDKSEKPFAETSQPKEPKPFADRAS) are compositionally biased toward basic and acidic residues. A compositionally biased stretch (basic residues) spans 719 to 732 (KKKKSSNMRRSIKL).

This sequence belongs to the peptidase C19 family.

The enzyme catalyses Thiol-dependent hydrolysis of ester, thioester, amide, peptide and isopeptide bonds formed by the C-terminal Gly of ubiquitin (a 76-residue protein attached to proteins as an intracellular targeting signal).. Its function is as follows. Recognizes and hydrolyzes the peptide bond at the C-terminal Gly of ubiquitin. Involved in the processing of poly-ubiquitin precursors as well as that of ubiquitinated proteins. This Arabidopsis thaliana (Mouse-ear cress) protein is Ubiquitin carboxyl-terminal hydrolase 21 (UBP21).